A 396-amino-acid polypeptide reads, in one-letter code: Putative glycosyltransferase HOC1 (396 aa).

The Cytoplasmic portion of the chain corresponds to 2 to 13; it reads AKTTKRASSFRR. The chain crosses the membrane as a helical; Signal-anchor for type II membrane protein span at residues 14–34; that stretch reads LMIFAIIALISLAFGVRYLFH. Residues 35-396 are Lumenal-facing; that stretch reads NSNATDLQKI…WKNTPKVEQK (362 aa). N37 carries an N-linked (GlcNAc...) asparagine glycan.

Belongs to the glycosyltransferase 32 family. In terms of assembly, component of the M-Pol II complex composed of ANP1, MNN9, MNN10, MNN11 and HOC1.

It localises to the golgi apparatus. It is found in the cis-Golgi network membrane. The M-Pol II complex possesses alpha-1,6-mannosyltransferase activity and is probably involved in the elongation of the mannan backbone of N-linked glycans on cell wall and periplasmic proteins. The chain is Putative glycosyltransferase HOC1 (HOC1) from Saccharomyces cerevisiae (strain ATCC 204508 / S288c) (Baker's yeast).